Reading from the N-terminus, the 27-residue chain is Bombinin-like peptide 2 (27 aa).

N27 bears the Asparagine amide mark.

Belongs to the bombinin family. As to expression, expressed by the skin glands.

The protein localises to the secreted. Functionally, has antimicrobial activity, but no hemolytic activity. Preference on killing Gram-negative non-enteric bacteria. This is Bombinin-like peptide 2 from Bombina orientalis (Oriental fire-bellied toad).